The sequence spans 394 residues: Protein TsgA homolog (394 aa).

Helical transmembrane passes span 11–31, 51–71, 76–96, 101–121, 134–154, 162–182, 206–226, 251–271, 274–294, 302–322, 334–354, and 363–383; these read WISYFSYALTGALVIVTGMVM, FLNAGILISIFLNAWLMEIIP, LMFGFVLMVLAIAGLMLGKSL, LCMFILGVVSGITMSIGTFLI, LLFTDSFFSMAGMIFPIVAAM, WYWVYACIGLLYVGIFVLTLF, IGVLFLSIAALCYILGQLGFI, FWTSYMIGMWVFSFILRFFDL, IVTILAALATGAMYLFVSTDN, IMALGFVSSAIYTTLITLGSL, FILTCGTIGTMLTFVVTGPIV, and LTTANGLYLAVFVMCLLLGFV.

This sequence belongs to the major facilitator superfamily. TsgA family.

The protein resides in the cell inner membrane. This chain is Protein TsgA homolog, found in Serratia proteamaculans (strain 568).